Here is a 178-residue protein sequence, read N- to C-terminus: Large ribosomal subunit protein bL19 (178 aa).

The protein belongs to the bacterial ribosomal protein bL19 family.

Its function is as follows. This protein is located at the 30S-50S ribosomal subunit interface and may play a role in the structure and function of the aminoacyl-tRNA binding site. The protein is Large ribosomal subunit protein bL19 of Rhizobium etli (strain ATCC 51251 / DSM 11541 / JCM 21823 / NBRC 15573 / CFN 42).